We begin with the raw amino-acid sequence, 339 residues long: Heat-inducible transcription repressor HrcA (339 aa).

Belongs to the HrcA family.

Functionally, negative regulator of class I heat shock genes (grpE-dnaK-dnaJ and groELS operons). Prevents heat-shock induction of these operons. This is Heat-inducible transcription repressor HrcA from Parafrankia sp. (strain EAN1pec).